The primary structure comprises 78 residues: D-alanyl carrier protein (78 aa).

A Carrier domain is found at 1 to 78 (MDFNQEVLSV…QIIKQLNELR (78 aa)). The residue at position 36 (S36) is an O-(pantetheine 4'-phosphoryl)serine.

The protein belongs to the DltC family. In terms of processing, 4'-phosphopantetheine is transferred from CoA to a specific serine of apo-DCP.

The protein localises to the cytoplasm. It functions in the pathway cell wall biogenesis; lipoteichoic acid biosynthesis. Functionally, carrier protein involved in the D-alanylation of lipoteichoic acid (LTA). The loading of thioester-linked D-alanine onto DltC is catalyzed by D-alanine--D-alanyl carrier protein ligase DltA. The DltC-carried D-alanyl group is further transferred to cell membrane phosphatidylglycerol (PG) by forming an ester bond, probably catalyzed by DltD. D-alanylation of LTA plays an important role in modulating the properties of the cell wall in Gram-positive bacteria, influencing the net charge of the cell wall. The polypeptide is D-alanyl carrier protein (Bacillus licheniformis (strain ATCC 14580 / DSM 13 / JCM 2505 / CCUG 7422 / NBRC 12200 / NCIMB 9375 / NCTC 10341 / NRRL NRS-1264 / Gibson 46)).